The following is a 229-amino-acid chain: Indole-3-glycerol phosphate synthase (229 aa).

This sequence belongs to the TrpC family.

The catalysed reaction is 1-(2-carboxyphenylamino)-1-deoxy-D-ribulose 5-phosphate + H(+) = (1S,2R)-1-C-(indol-3-yl)glycerol 3-phosphate + CO2 + H2O. It functions in the pathway amino-acid biosynthesis; L-tryptophan biosynthesis; L-tryptophan from chorismate: step 4/5. This chain is Indole-3-glycerol phosphate synthase, found in Pyrococcus abyssi (strain GE5 / Orsay).